Here is a 147-residue protein sequence, read N- to C-terminus: uncharacterized protein (147 aa).

The 104-residue stretch at 44–147 folds into the HTH LytTR-type domain; it reads LVGYIDKEIH…LKSIKERLSI (104 aa).

The protein resides in the cytoplasm. This is an uncharacterized protein from Staphylococcus aureus (strain COL).